Here is a 157-residue protein sequence, read N- to C-terminus: Lipoprotein signal peptidase (157 aa).

The next 3 helical transmembrane spans lie at 10-30 (LIFIVVFSLIFGTDQAIKYAI), 58-78 (FLEGGLKYLQILLILGLFIFL), and 84-104 (LFKNHAIEFGMVFGAGVSNVL). Residues Asp114 and Asp131 contribute to the active site. A helical membrane pass occupies residues 122-142 (FDFAIFNFADVMIDVGVGVLL).

Belongs to the peptidase A8 family.

Its subcellular location is the cell inner membrane. The catalysed reaction is Release of signal peptides from bacterial membrane prolipoproteins. Hydrolyzes -Xaa-Yaa-Zaa-|-(S,diacylglyceryl)Cys-, in which Xaa is hydrophobic (preferably Leu), and Yaa (Ala or Ser) and Zaa (Gly or Ala) have small, neutral side chains.. Its pathway is protein modification; lipoprotein biosynthesis (signal peptide cleavage). This protein specifically catalyzes the removal of signal peptides from prolipoproteins. This Helicobacter pylori (strain Shi470) protein is Lipoprotein signal peptidase.